A 1475-amino-acid chain; its full sequence is Mediator of RNA polymerase II transcription subunit 1.1 (1475 aa).

3 disordered regions span residues 579 to 600 (STIGRTRPQPRPKREPNQLTSM), 645 to 894 (GLAS…KMRE), and 908 to 1475 (PDVE…IDDE). Positions 655 to 666 (PVAAAAAAPGGP) are enriched in low complexity. Positions 755–766 (QRSSSEQHNPNP) are enriched in polar residues. The span at 767–800 (HQMSQYQMQQYQQNQQFRMHQMQQQQQQQFQMQS) shows a compositional bias: low complexity. Over residues 810–819 (TDEDSDEECD) the composition is skewed to acidic residues. Residues 829–838 (STSSRMSSVP) are compositionally biased toward low complexity. A compositionally biased stretch (pro residues) spans 869–880 (TPSPLSAPPKPF). Residues 915-929 (QQLSSSSSSSQAEAS) are compositionally biased toward low complexity. Residues 941–952 (PPKPSSSSAPPP) show a composition bias toward pro residues. Composition is skewed to low complexity over residues 969–989 (QQEQALQKQLQQQESVESELA) and 1037–1049 (QKPTDTSSQSTSS). Basic and acidic residues-rich tracts occupy residues 1052-1070 (PPKKEPADEQPEREKEKLI), 1080-1148 (VVDD…EKEP), and 1155-1180 (EKKDEKEKDRREPERKKGKSDGKEYS). Residues 1098-1135 (DRDRDEDREKVRDKEDKAQREKDKKEKERERRRQRDRD) adopt a coiled-coil conformation. Over residues 1181 to 1193 (KASTTSLIPTLSL) the composition is skewed to polar residues. Residues 1199-1215 (PKKDTVEEEKKDVKEEA) show a composition bias toward basic and acidic residues. Low complexity predominate over residues 1242 to 1252 (APVAPAVQQQQ). Residues 1281 to 1291 (PLQPPPPPQMT) are compositionally biased toward pro residues. Positions 1308–1317 (PGSSRPSGNR) are enriched in polar residues. Pro residues-rich tracts occupy residues 1320-1334 (PLPPPPPMIRGPPPD) and 1425-1440 (PPAPPPPQMIPLPKDP).

Belongs to the Mediator complex subunit 1 family. In terms of assembly, component of the Mediator complex.

Its subcellular location is the nucleus. Component of the Mediator complex, a coactivator involved in the regulated transcription of nearly all RNA polymerase II-dependent genes. Mediator functions as a bridge to convey information from gene-specific regulatory proteins to the basal RNA polymerase II transcription machinery. Mediator is recruited to promoters by direct interactions with regulatory proteins and serves as a scaffold for the assembly of a functional preinitiation complex with RNA polymerase II and the general transcription factors. This is Mediator of RNA polymerase II transcription subunit 1.1 (sop-3) from Caenorhabditis elegans.